We begin with the raw amino-acid sequence, 134 residues long: Small ribosomal subunit protein uS8c (134 aa).

The protein belongs to the universal ribosomal protein uS8 family. In terms of assembly, part of the 30S ribosomal subunit.

The protein localises to the plastid. It is found in the chloroplast. Functionally, one of the primary rRNA binding proteins, it binds directly to 16S rRNA central domain where it helps coordinate assembly of the platform of the 30S subunit. The chain is Small ribosomal subunit protein uS8c (rps8) from Glycine max (Soybean).